Here is a 356-residue protein sequence, read N- to C-terminus: Acyl-coenzyme A diphosphatase NUDT19 (356 aa).

The Nudix hydrolase domain occupies 10–241 (AATVMLAAGW…IWLAPPQFYE (232 aa)). The tract at residues 72–94 (PRFGLGPEPPRQPPFPGLSHGDA) is disordered. Residues 78-87 (PEPPRQPPFP) are compositionally biased toward pro residues. Residues 97 to 118 (AALPDDVALRICAIRETFEEAG) carry the Nudix box motif. Glu-112 and Glu-116 together coordinate Mg(2+). Lys-299 carries the post-translational modification N6-succinyllysine. Residues 354–356 (ARL) carry the Microbody targeting signal motif.

It belongs to the Nudix hydrolase family. Monomer. Mg(2+) serves as cofactor. The cofactor is Mn(2+).

It is found in the peroxisome. It catalyses the reaction an acyl-CoA + H2O = an acyl-4'-phosphopantetheine + adenosine 3',5'-bisphosphate + 2 H(+). The catalysed reaction is CoA + H2O = (R)-4'-phosphopantetheine + adenosine 3',5'-bisphosphate + 2 H(+). It carries out the reaction hexanoyl-CoA + H2O = hexanoyl-4'-phosphopantetheine + adenosine 3',5'-bisphosphate + 2 H(+). The enzyme catalyses octanoyl-CoA + H2O = S-octanoyl-4'-phosphopantetheine + adenosine 3',5'-bisphosphate + 2 H(+). It catalyses the reaction butanoyl-CoA + H2O = S-butanoyl-4'-phosphopantetheine + adenosine 3',5'-bisphosphate + 2 H(+). The catalysed reaction is propanoyl-CoA + H2O = propanoyl-4'-phosphopantetheine + adenosine 3',5'-bisphosphate + 2 H(+). It carries out the reaction malonyl-CoA + H2O = malonyl-4'-phosphopantetheine + adenosine 3',5'-bisphosphate + 2 H(+). The enzyme catalyses succinyl-CoA + H2O = succinyl-4'-phosphopantetheine + adenosine 3',5'-bisphosphate + 2 H(+). It catalyses the reaction choloyl-CoA + H2O = S-choloyl-4'-phosphopantetheine + adenosine 3',5'-bisphosphate + 2 H(+). The catalysed reaction is 4,8-dimethylnonanoyl-CoA + H2O = S-(4,8-dimethylnonanoyl)-4'-phosphopantetheine + adenosine 3',5'-bisphosphate + 2 H(+). It carries out the reaction (9Z,12Z,15Z)-octadecatrienoyl-CoA + H2O = S-(9Z,12Z,15Z-octadecatrienoyl)-4'-phosphopantetheine + adenosine 3',5'-bisphosphate + 2 H(+). The enzyme catalyses (9Z,12Z)-octadecadienoyl-CoA + H2O = S-(9Z,12Z-octadecadienoyl)-4'-phosphopantetheine + adenosine 3',5'-bisphosphate + 2 H(+). It catalyses the reaction (9Z)-hexadecenoyl-CoA + H2O = S-(9Z-hexadecenoyl)-4'-phosphopantetheine + adenosine 3',5'-bisphosphate + 2 H(+). The catalysed reaction is (9Z)-tetradecenoyl-CoA + H2O = S-(9Z-tetradecenoyl)-4'-phosphopantetheine + adenosine 3',5'-bisphosphate + 2 H(+). It carries out the reaction (6Z)-octenoyl-CoA + H2O = S-(6Z-octenoyl)-4'-phosphopantetheine + adenosine 3',5'-bisphosphate + 2 H(+). The enzyme catalyses hexadecanoyl-CoA + H2O = S-hexadecanoyl-4'-phosphopantetheine + adenosine 3',5'-bisphosphate + 2 H(+). It catalyses the reaction tetradecanoyl-CoA + H2O = tetradecanoyl-4'-phosphopantetheine + adenosine 3',5'-bisphosphate + 2 H(+). The catalysed reaction is dodecanoyl-CoA + H2O = S-dodecanoyl-4'-phosphopantetheine + adenosine 3',5'-bisphosphate + 2 H(+). It carries out the reaction a 5'-end CoA-ribonucleoside in mRNA + H2O = a 5'-end phospho-adenosine-phospho-ribonucleoside in mRNA + (R)-4'-phosphopantetheine + 2 H(+). Its function is as follows. Fatty acyl-coenzyme A (CoA) diphosphatase that hydrolyzes fatty acyl-CoA to yield acyl-4'-phosphopantetheine and adenosine 3',5'-bisphosphate. Mediates the hydrolysis of a wide range of CoA esters, including choloyl-CoA and branched-chain fatty-acyl-CoA esters and at low substrate concentrations medium and long-chain fatty-acyl-CoA esters are the primary substrates. Highest activity seen with medium-chain acyl-CoA esters and higher rates of activity seen with the unsaturated acyl-CoA esters compared with the saturated esters. Exhibits decapping activity towards dpCoA-capped RNAs in vitro. In Mus saxicola (Brown spiny mouse), this protein is Acyl-coenzyme A diphosphatase NUDT19 (Nudt19).